A 467-amino-acid chain; its full sequence is Argininosuccinate lyase 1 (467 aa).

This sequence belongs to the lyase 1 family. Argininosuccinate lyase subfamily.

Its subcellular location is the cytoplasm. It carries out the reaction 2-(N(omega)-L-arginino)succinate = fumarate + L-arginine. It participates in amino-acid biosynthesis; L-arginine biosynthesis; L-arginine from L-ornithine and carbamoyl phosphate: step 3/3. The sequence is that of Argininosuccinate lyase 1 from Rhizobium meliloti (strain 1021) (Ensifer meliloti).